A 256-amino-acid chain; its full sequence is Type III pantothenate kinase (256 aa).

An ATP-binding site is contributed by 6-13 (DVGNTNTV). Residues Tyr-100 and 107-110 (GADR) contribute to the substrate site. Asp-109 functions as the Proton acceptor in the catalytic mechanism. Asp-129 is a K(+) binding site. An ATP-binding site is contributed by Thr-132. Thr-184 provides a ligand contact to substrate.

The protein belongs to the type III pantothenate kinase family. Homodimer. NH4(+) is required as a cofactor. Requires K(+) as cofactor.

It localises to the cytoplasm. It catalyses the reaction (R)-pantothenate + ATP = (R)-4'-phosphopantothenate + ADP + H(+). The protein operates within cofactor biosynthesis; coenzyme A biosynthesis; CoA from (R)-pantothenate: step 1/5. Functionally, catalyzes the phosphorylation of pantothenate (Pan), the first step in CoA biosynthesis. The protein is Type III pantothenate kinase of Myxococcus xanthus (strain DK1622).